We begin with the raw amino-acid sequence, 39 residues long: Cytochrome b559 subunit beta (39 aa).

The chain crosses the membrane as a helical span at residues 14–30 (WLAVHGLAVPTVFFLGS). Residue His18 coordinates heme.

It belongs to the PsbE/PsbF family. As to quaternary structure, heterodimer of an alpha subunit and a beta subunit. PSII is composed of 1 copy each of membrane proteins PsbA, PsbB, PsbC, PsbD, PsbE, PsbF, PsbH, PsbI, PsbJ, PsbK, PsbL, PsbM, PsbT, PsbX, PsbY, PsbZ, Psb30/Ycf12, at least 3 peripheral proteins of the oxygen-evolving complex and a large number of cofactors. It forms dimeric complexes. Heme b is required as a cofactor.

The protein localises to the plastid. It is found in the chloroplast thylakoid membrane. In terms of biological role, this b-type cytochrome is tightly associated with the reaction center of photosystem II (PSII). PSII is a light-driven water:plastoquinone oxidoreductase that uses light energy to abstract electrons from H(2)O, generating O(2) and a proton gradient subsequently used for ATP formation. It consists of a core antenna complex that captures photons, and an electron transfer chain that converts photonic excitation into a charge separation. In Adiantum capillus-veneris (Maidenhair fern), this protein is Cytochrome b559 subunit beta.